The chain runs to 253 residues: ATP synthase subunit b 2 (253 aa).

A helical membrane pass occupies residues 9–27 (VLEIVNFLVLVWLLKRFLY).

Belongs to the ATPase B chain family. As to quaternary structure, F-type ATPases have 2 components, F(1) - the catalytic core - and F(0) - the membrane proton channel. F(1) has five subunits: alpha(3), beta(3), gamma(1), delta(1), epsilon(1). F(0) has three main subunits: a(1), b(2) and c(10-14). The alpha and beta chains form an alternating ring which encloses part of the gamma chain. F(1) is attached to F(0) by a central stalk formed by the gamma and epsilon chains, while a peripheral stalk is formed by the delta and b chains.

The protein localises to the cell inner membrane. F(1)F(0) ATP synthase produces ATP from ADP in the presence of a proton or sodium gradient. F-type ATPases consist of two structural domains, F(1) containing the extramembraneous catalytic core and F(0) containing the membrane proton channel, linked together by a central stalk and a peripheral stalk. During catalysis, ATP synthesis in the catalytic domain of F(1) is coupled via a rotary mechanism of the central stalk subunits to proton translocation. In terms of biological role, component of the F(0) channel, it forms part of the peripheral stalk, linking F(1) to F(0). The chain is ATP synthase subunit b 2 from Methylococcus capsulatus (strain ATCC 33009 / NCIMB 11132 / Bath).